The primary structure comprises 372 residues: Methylthioribose-1-phosphate isomerase (372 aa).

The active-site Proton donor is Asp252.

The protein belongs to the eIF-2B alpha/beta/delta subunits family. MtnA subfamily.

It is found in the cytoplasm. Its subcellular location is the nucleus. The catalysed reaction is 5-(methylsulfanyl)-alpha-D-ribose 1-phosphate = 5-(methylsulfanyl)-D-ribulose 1-phosphate. It participates in amino-acid biosynthesis; L-methionine biosynthesis via salvage pathway; L-methionine from S-methyl-5-thio-alpha-D-ribose 1-phosphate: step 1/6. Its function is as follows. Catalyzes the interconversion of methylthioribose-1-phosphate (MTR-1-P) into methylthioribulose-1-phosphate (MTRu-1-P). The chain is Methylthioribose-1-phosphate isomerase from Yarrowia lipolytica (strain CLIB 122 / E 150) (Yeast).